The chain runs to 153 residues: Probable inactive ribonuclease-like protein 13 (153 aa).

Positions 1 to 22 (MASDAASLLVLQLVLQPTLVTG) are cleaved as a signal peptide.

The protein belongs to the pancreatic ribonuclease family.

Its subcellular location is the secreted. Does not exhibit any ribonuclease activity. The polypeptide is Probable inactive ribonuclease-like protein 13 (Rnase13) (Rattus norvegicus (Rat)).